The primary structure comprises 169 residues: Disulfide bond formation protein B (169 aa).

Topologically, residues Met-1–Phe-14 are cytoplasmic. A helical membrane pass occupies residues Leu-15–Tyr-31. At Met-32–Tyr-49 the chain is on the periplasmic side. Cys-41 and Cys-44 are joined by a disulfide. The helical transmembrane segment at Ala-50–Met-64 threads the bilayer. At Asn-65 to Thr-71 the chain is on the cytoplasmic side. A helical transmembrane segment spans residues Val-72–Gly-89. Over Arg-90 to Gln-144 the chain is Periplasmic. Cys-102 and Cys-130 are oxidised to a cystine. Residues Trp-145 to Arg-163 traverse the membrane as a helical segment. Residues Asn-164–Tyr-169 lie on the Cytoplasmic side of the membrane.

This sequence belongs to the DsbB family.

The protein localises to the cell inner membrane. Required for disulfide bond formation in some periplasmic proteins. Acts by oxidizing the DsbA protein. This chain is Disulfide bond formation protein B, found in Pseudomonas syringae pv. tomato (strain ATCC BAA-871 / DC3000).